The following is a 438-amino-acid chain: Sphingomyelinase phosphodiesterase D (438 aa).

Positions 1-17 (MKIILILVLVLVVSINA) are cleaved as a signal peptide. Residues Asp27 and His29 each contribute to the Zn(2+) site. An N-linked (GlcNAc...) asparagine glycan is attached at Asn40. Residues Asp111 and Asn148 each coordinate Zn(2+). N-linked (GlcNAc...) asparagine glycosylation occurs at Asn160. His247 lines the Zn(2+) pocket. An N-linked (GlcNAc...) asparagine glycan is attached at Asn271. Residues His287 and His289 each coordinate Zn(2+). N-linked (GlcNAc...) asparagine glycosylation is found at Asn338 and Asn359.

It belongs to the acid sphingomyelinase family. Requires Zn(2+) as cofactor.

It is found in the secreted. This chain is Sphingomyelinase phosphodiesterase D (sgmD), found in Dictyostelium discoideum (Social amoeba).